Here is a 417-residue protein sequence, read N- to C-terminus: F-box protein At3g07870 (417 aa).

Residues 22 to 68 (GGGLESLPEDIIADIFSRLPISSIARLMFVCRSWRSVLTQHGRLSSS) enclose the F-box domain.

In Arabidopsis thaliana (Mouse-ear cress), this protein is F-box protein At3g07870.